The chain runs to 316 residues: Small ribosomal subunit biogenesis GTPase RsgA (316 aa).

Residues 1 to 20 are disordered; sequence MSKLSHQQQRRIHNHRQNKL. Over residues 8 to 18 the composition is skewed to basic residues; sequence QQRRIHNHRQN. The region spanning 92 to 251 is the CP-type G domain; it reads AGKLKPVASN…IIDTPGVRGF (160 aa). GTP contacts are provided by residues 139–142 and 193–201; these read NKSD and GQSGVGKSS. Residues Cys-275, Cys-280, His-282, and Cys-288 each coordinate Zn(2+).

Belongs to the TRAFAC class YlqF/YawG GTPase family. RsgA subfamily. Monomer. Associates with 30S ribosomal subunit, binds 16S rRNA. It depends on Zn(2+) as a cofactor.

The protein localises to the cytoplasm. One of several proteins that assist in the late maturation steps of the functional core of the 30S ribosomal subunit. Helps release RbfA from mature subunits. May play a role in the assembly of ribosomal proteins into the subunit. Circularly permuted GTPase that catalyzes slow GTP hydrolysis, GTPase activity is stimulated by the 30S ribosomal subunit. This chain is Small ribosomal subunit biogenesis GTPase RsgA, found in Dichelobacter nodosus (strain VCS1703A).